Reading from the N-terminus, the 53-residue chain is Kunitz-type trypsin inhibitor alpha chain (53 aa).

Residues 33–53 form a disordered region; sequence GWGLPRRTGDESCPLNVKAVR.

This sequence belongs to the protease inhibitor I3 (leguminous Kunitz-type inhibitor) family. As to quaternary structure, heterodimer of an alpha and a beta chain linked by a disulfide bond.

Its function is as follows. Inhibits trypsin with a Ki of 0.25 uM. Inhibits the trypsin-like proteases in midguts of larval H.armigera, S.exigua, and P.rapae. This chain is Kunitz-type trypsin inhibitor alpha chain, found in Albizia kalkora (Kalkora mimosa).